Consider the following 100-residue polypeptide: Small ribosomal subunit protein uS14c (100 aa).

Belongs to the universal ribosomal protein uS14 family. In terms of assembly, part of the 30S ribosomal subunit.

The protein localises to the plastid. Its subcellular location is the chloroplast. In terms of biological role, binds 16S rRNA, required for the assembly of 30S particles. In Chlorella vulgaris (Green alga), this protein is Small ribosomal subunit protein uS14c.